Reading from the N-terminus, the 643-residue chain is tRNA 5-methylaminomethyl-2-thiouridine biosynthesis bifunctional protein MnmC (643 aa).

Residues 1-223 are tRNA (mnm(5)s(2)U34)-methyltransferase; that stretch reads MPDRLVSATL…VDDRLVGDYA (223 aa). The segment at 247–643 is FAD-dependent cmnm(5)s(2)U34 oxidoreductase; it reads IGAGLAGCAV…LRARRVGSAG (397 aa).

The protein in the N-terminal section; belongs to the methyltransferase superfamily. tRNA (mnm(5)s(2)U34)-methyltransferase family. This sequence in the C-terminal section; belongs to the DAO family. FAD serves as cofactor.

It is found in the cytoplasm. The catalysed reaction is 5-aminomethyl-2-thiouridine(34) in tRNA + S-adenosyl-L-methionine = 5-methylaminomethyl-2-thiouridine(34) in tRNA + S-adenosyl-L-homocysteine + H(+). In terms of biological role, catalyzes the last two steps in the biosynthesis of 5-methylaminomethyl-2-thiouridine (mnm(5)s(2)U) at the wobble position (U34) in tRNA. Catalyzes the FAD-dependent demodification of cmnm(5)s(2)U34 to nm(5)s(2)U34, followed by the transfer of a methyl group from S-adenosyl-L-methionine to nm(5)s(2)U34, to form mnm(5)s(2)U34. The sequence is that of tRNA 5-methylaminomethyl-2-thiouridine biosynthesis bifunctional protein MnmC from Burkholderia cenocepacia (strain HI2424).